The primary structure comprises 85 residues: Toxin BmKaTX15 (85 aa).

The N-terminal stretch at 1–19 (MNYLVFFSLALLVMTGVES) is a signal peptide. An LCN-type CS-alpha/beta domain is found at 21-83 (RDGYIADDKN…VPIRVPGKCN (63 aa)). Intrachain disulfides connect C31/C82, C35/C55, C41/C65, and C45/C67.

This sequence belongs to the long (4 C-C) scorpion toxin superfamily. Sodium channel inhibitor family. Alpha subfamily. In terms of tissue distribution, expressed by the venom gland.

The protein resides in the secreted. Alpha toxins bind voltage-independently at site-3 of sodium channels (Nav) and inhibit the inactivation of the activated channels, thereby blocking neuronal transmission. The polypeptide is Toxin BmKaTX15 (Olivierus martensii (Manchurian scorpion)).